A 315-amino-acid chain; its full sequence is Ribosomal protein L11 methyltransferase (315 aa).

The S-adenosyl-L-methionine site is built by threonine 164, glycine 185, aspartate 207, and asparagine 250.

This sequence belongs to the methyltransferase superfamily. PrmA family.

The protein localises to the cytoplasm. The enzyme catalyses L-lysyl-[protein] + 3 S-adenosyl-L-methionine = N(6),N(6),N(6)-trimethyl-L-lysyl-[protein] + 3 S-adenosyl-L-homocysteine + 3 H(+). Functionally, methylates ribosomal protein L11. This is Ribosomal protein L11 methyltransferase from Exiguobacterium sibiricum (strain DSM 17290 / CCUG 55495 / CIP 109462 / JCM 13490 / 255-15).